A 127-amino-acid chain; its full sequence is Large ribosomal subunit protein bL12 (127 aa).

This sequence belongs to the bacterial ribosomal protein bL12 family. Homodimer. Part of the ribosomal stalk of the 50S ribosomal subunit. Forms a multimeric L10(L12)X complex, where L10 forms an elongated spine to which 2 to 4 L12 dimers bind in a sequential fashion. Binds GTP-bound translation factors.

Forms part of the ribosomal stalk which helps the ribosome interact with GTP-bound translation factors. Is thus essential for accurate translation. In Chloroherpeton thalassium (strain ATCC 35110 / GB-78), this protein is Large ribosomal subunit protein bL12.